We begin with the raw amino-acid sequence, 224 residues long: Inhibitor of apoptosis protein (224 aa).

The BIR repeat unit spans residues 29-92; the sequence is VDARNKSFAI…GFWSRNCGFM (64 aa). Zn(2+) contacts are provided by C62, C65, H82, and C89. Residues 189 to 207 form a C4-type zinc finger; it reads CMTCGIEQINKDENFCSAC.

Belongs to the asfivirus IAP family. In terms of assembly, interacts with subunit p17 of host CASP3.

The protein localises to the host cytoplasm. It is found in the virion. Functionally, prevents apoptosis of host cell by inhibiting caspase-3/CASP3 activation to promote the viral replication. Also induces the activation of host NF-kappaB. This is Inhibitor of apoptosis protein from Ornithodoros (relapsing fever ticks).